The chain runs to 195 residues: Peptidyl-tRNA hydrolase (195 aa).

Y14 lines the tRNA pocket. H19 (proton acceptor) is an active-site residue. 2 residues coordinate tRNA: Y64 and N66.

The protein belongs to the PTH family. Monomer.

It localises to the cytoplasm. The catalysed reaction is an N-acyl-L-alpha-aminoacyl-tRNA + H2O = an N-acyl-L-amino acid + a tRNA + H(+). In terms of biological role, hydrolyzes ribosome-free peptidyl-tRNAs (with 1 or more amino acids incorporated), which drop off the ribosome during protein synthesis, or as a result of ribosome stalling. Functionally, catalyzes the release of premature peptidyl moieties from peptidyl-tRNA molecules trapped in stalled 50S ribosomal subunits, and thus maintains levels of free tRNAs and 50S ribosomes. The chain is Peptidyl-tRNA hydrolase from Desulforudis audaxviator (strain MP104C).